Consider the following 444-residue polypeptide: Adenine permease AdeQ (444 aa).

Topologically, residues 1-29 are cytoplasmic; sequence MNNDNTDYVSNESGTLSRLFKLPQHGTTV. The helical transmembrane segment at 30–53 threads the bilayer; that stretch reads RTELIAGMTTFLTMVYIVFVNPQI. The Periplasmic portion of the chain corresponds to 54-63; sequence LGAAQMDPKV. The chain crosses the membrane as a helical span at residues 64 to 82; the sequence is VFVTTCLIAGIGSIAMGIF. Topologically, residues 83 to 84 are cytoplasmic; it reads AN. The chain crosses the membrane as a discontinuously helical span at residues 85–101; that stretch reads LPVALAPAMGLNAFFAF. Residues 102-113 lie on the Periplasmic side of the membrane; the sequence is VVVGAMGISWQT. The chain crosses the membrane as a helical span at residues 114–133; the sequence is GMGAIFWGAVGLFLLTLFRI. Residues 134 to 145 are Cytoplasmic-facing; it reads RYWMISNIPLSL. Residues 146–166 form a helical membrane-spanning segment; that stretch reads RIGITSGIGLFIALMGLKNTG. Residues 167-182 are Periplasmic-facing; it reads VIVANKDTLVMIGDLS. Residues 183–200 form a helical membrane-spanning segment; sequence SHGVLLGILGFFIITVLS. The Cytoplasmic segment spans residues 201-204; sequence SRHF. The helical transmembrane segment at 205 to 223 threads the bilayer; it reads HAAVLVSIVVTSCCGLFFG. Topologically, residues 224 to 251 are periplasmic; sequence DVHFSGVYSIPPDISGVIGEVDLSGALT. A helical membrane pass occupies residues 252 to 280; the sequence is LELAGIIFSFMLINLFDSSGTLIGVTDKA. Residues 281 to 293 are Cytoplasmic-facing; the sequence is GLIDGNGKFPNMN. A helical transmembrane segment spans residues 294–309; it reads KALYVDSVSSVAGAFI. Topologically, residues 310 to 311 are periplasmic; it reads GT. The discontinuously helical transmembrane segment at 312–327 threads the bilayer; sequence SSVTAYIESTSGVAVG. At 328–331 the chain is on the cytoplasmic side; that stretch reads GRTG. The helical transmembrane segment at 332–346 threads the bilayer; it reads LTAVVVGVMFLLVMF. At 347–357 the chain is on the periplasmic side; the sequence is FSPLVAIVPPY. A helical membrane pass occupies residues 358–377; sequence ATAGALIFVGVLMTSSLARV. Residues 378–382 are Cytoplasmic-facing; that stretch reads NWDDF. The discontinuously helical intramembrane region spans 383–418; that stretch reads TESVPAFITTVMMPFTFSITEGIALGFMSYCIMKVC. Over 419–444 the chain is Cytoplasmic; sequence TGRWRDLNLCVVVVAALFALKIILVD.

This sequence belongs to the nucleobase:cation symporter-2 (NCS2) (TC 2.A.40) family. Azg-like subfamily.

It is found in the cell inner membrane. High-affinity transporter for adenine. The chain is Adenine permease AdeQ (adeQ) from Escherichia coli (strain K12).